We begin with the raw amino-acid sequence, 352 residues long: C-C chemokine receptor type 5 (352 aa).

Topologically, residues 1–30 (MDYQVSSPTYDIDYYTSEPCQKVNVKQIAA) are extracellular. Tyr-3 bears the Sulfotyrosine mark. Ser-6 and Ser-7 each carry an O-linked (GalNAc...) serine glycan. Residues Tyr-10, Tyr-14, and Tyr-15 each carry the sulfotyrosine modification. Disulfide bonds link Cys-20–Cys-269 and Cys-101–Cys-178. The chain crosses the membrane as a helical span at residues 31–58 (RLLPPLYSLVFIFGFVGNILVVLILINC). Topologically, residues 59–68 (KRLKSMTDIY) are cytoplasmic. The chain crosses the membrane as a helical span at residues 69–89 (LLNLAISDLFFLLTVPFWAHY). Residues 90–102 (AAAQWDFGNTMCQ) lie on the Extracellular side of the membrane. Residues 103–124 (LLTGLYFIGFFSGIFFIILLTI) traverse the membrane as a helical segment. Residues 125-141 (DRYLAIVHAVFALKART) are Cytoplasmic-facing. The chain crosses the membrane as a helical span at residues 142–166 (VTFGVVTSVITWVVAVFASLPGIIF). At 167–198 (TRSQREGVHYTCSSHFPYSQYQFWKNFQTLKI) the chain is on the extracellular side. Residues 199–218 (VILGLVLPLLVMVICYSGIL) traverse the membrane as a helical segment. Residues 219-235 (KTLLRCRNEKKRHRAVR) are Cytoplasmic-facing. Residues 236–260 (LIFTIMIVYFLFWAPYNIVLLLNTF) traverse the membrane as a helical segment. Topologically, residues 261–277 (QEFFGLNNCSSSNRLDQ) are extracellular. A helical transmembrane segment spans residues 278–301 (AMQVTETLGMTHCCINPIIYAFVG). Residues 302-352 (EKFRNYLLVFFQKHIAKRFCKCCSIFQQEAPERASSVYTRSTGEQETSVGL) lie on the Cytoplasmic side of the membrane. 3 S-palmitoyl cysteine lipidation sites follow: Cys-321, Cys-323, and Cys-324. Phosphoserine; by BARK1 is present on residues Ser-336, Ser-337, Ser-342, and Ser-349.

Belongs to the G-protein coupled receptor 1 family. As to quaternary structure, interacts with PRAF2. Efficient ligand binding to CCL3/MIP-1alpha and CCL4/MIP-1beta requires sulfation, O-glycosylation and sialic acid modifications. Glycosylation on Ser-6 is required for efficient binding of CCL4. Interacts with GRK2. Interacts with ARRB1 and ARRB2. Interacts with CNIH4. Interacts with S100A4; this interaction stimulates T-lymphocyte chemotaxis. Post-translationally, sulfated on at least 2 of the N-terminal tyrosines. Sulfation is required for efficient binding of the chemokines, CCL3 and CCL4. Palmitoylation in the C-terminal is important for cell surface expression. In terms of processing, phosphorylation on serine residues in the C-terminal is stimulated by binding CC chemokines especially by APO-RANTES. Post-translationally, O-glycosylated, but not N-glycosylated. Ser-6 appears to be the major site even if Ser-7 may be also O-glycosylated. Also sialylated glycans present which contribute to chemokine binding. Thr-16 and Ser-17 may also be glycosylated and, if so, with small moieties such as a T-antigen.

The protein localises to the cell membrane. Functionally, receptor for a number of inflammatory CC-chemokines including CCL3/MIP-1-alpha, CCL4/MIP-1-beta and RANTES and subsequently transduces a signal by increasing the intracellular calcium ion level. May play a role in the control of granulocytic lineage proliferation or differentiation. Participates in T-lymphocyte migration to the infection site by acting as a chemotactic receptor. The protein is C-C chemokine receptor type 5 (CCR5) of Rhinopithecus avunculus (Tonkin snub-nosed monkey).